The primary structure comprises 351 residues: L-threonine 3-dehydrogenase (351 aa).

C39 is a binding site for Zn(2+). Active-site charge relay system residues include T41 and H44. Positions 64, 65, 94, 97, 100, and 108 each coordinate Zn(2+). NAD(+) is bound by residues I176, D196, R201, 271 to 273, and 295 to 296; these read LGI and IY.

This sequence belongs to the zinc-containing alcohol dehydrogenase family. Homotetramer. It depends on Zn(2+) as a cofactor.

It localises to the cytoplasm. The catalysed reaction is L-threonine + NAD(+) = (2S)-2-amino-3-oxobutanoate + NADH + H(+). It participates in amino-acid degradation; L-threonine degradation via oxydo-reductase pathway; glycine from L-threonine: step 1/2. Its function is as follows. Catalyzes the NAD(+)-dependent oxidation of L-threonine to 2-amino-3-ketobutyrate. This Francisella tularensis subsp. novicida (strain U112) protein is L-threonine 3-dehydrogenase.